The chain runs to 115 residues: Cytochrome c (115 aa).

Heme c is bound by residues cysteine 26, cysteine 29, histidine 30, and methionine 91.

It belongs to the cytochrome c family. Post-translationally, binds 1 heme c group covalently per subunit.

The protein localises to the mitochondrion intermembrane space. Electron carrier protein. The oxidized form of the cytochrome c heme group can accept an electron from the heme group of the cytochrome c1 subunit of cytochrome reductase. Cytochrome c then transfers this electron to the cytochrome oxidase complex, the final protein carrier in the mitochondrial electron-transport chain. This is Cytochrome c from Theileria annulata.